Reading from the N-terminus, the 825-residue chain is Probable phosphoketolase (825 aa).

The protein belongs to the XFP family. Requires thiamine diphosphate as cofactor.

This chain is Probable phosphoketolase, found in Bifidobacterium animalis subsp. lactis (strain AD011).